The primary structure comprises 240 residues: tRNA (guanine-N(1)-)-methyltransferase (240 aa).

S-adenosyl-L-methionine is bound by residues Gly-108 and 127–132 (LGDFIL).

This sequence belongs to the RNA methyltransferase TrmD family. In terms of assembly, homodimer.

The protein localises to the cytoplasm. The catalysed reaction is guanosine(37) in tRNA + S-adenosyl-L-methionine = N(1)-methylguanosine(37) in tRNA + S-adenosyl-L-homocysteine + H(+). Functionally, specifically methylates guanosine-37 in various tRNAs. The sequence is that of tRNA (guanine-N(1)-)-methyltransferase from Streptococcus mutans serotype c (strain ATCC 700610 / UA159).